The sequence spans 1284 residues: DNA topoisomerase 2, mitochondrial (1284 aa).

The N-terminal 35 residues, 1–35 (MSKLLNNNNHKNLTNYLKFGKGIINNLNNKSKQVG), are a transit peptide targeting the mitochondrion. Residues Asn183, Asn212, 240-242 (GSN), and 253-260 (GRNGFGAK) each bind ATP. An interaction with DNA region spans residues 445–447 (KKK). 478-480 (QSK) serves as a coordination point for ATP. A Toprim domain is found at 560–677 (CTLIITEGDS…NLLKRGFLVE (118 aa)). 3 residues coordinate Mg(2+): Glu566, Asp646, and Asp648. The region spanning 810-1232 (IPSLIDGLKP…DPKSLWTADL (423 aa)) is the Topo IIA-type catalytic domain. The O-(5'-phospho-DNA)-tyrosine intermediate role is filled by Tyr900. Positions 1245–1284 (EFQKKPLKTSSSSSFDVSSSSESAKLSSTRKSKTDKIKSK) are disordered. A compositionally biased stretch (low complexity) spans 1254 to 1271 (SSSSSFDVSSSSESAKLS).

The protein belongs to the type II topoisomerase family. As to quaternary structure, homodimer. The cofactor is Mg(2+). Mn(2+) is required as a cofactor. Ca(2+) serves as cofactor.

The protein resides in the mitochondrion. It carries out the reaction ATP-dependent breakage, passage and rejoining of double-stranded DNA.. In terms of biological role, control of topological states of DNA by transient breakage and subsequent rejoining of DNA strands. Topoisomerase II makes double-strand breaks. In Dictyostelium discoideum (Social amoeba), this protein is DNA topoisomerase 2, mitochondrial (top2mt).